A 297-amino-acid chain; its full sequence is Tyrosine recombinase XerD (297 aa).

Positions 1 to 86 (MNDLIEDFLH…SLRSFFHYLM (86 aa)) constitute a Core-binding (CB) domain. The region spanning 107 to 291 (GLPKVLNLDD…TKLRLKDVYK (185 aa)) is the Tyr recombinase domain. Residues Arg-147, Lys-171, His-243, Arg-246, and His-269 contribute to the active site. The active-site O-(3'-phospho-DNA)-tyrosine intermediate is Tyr-278.

Belongs to the 'phage' integrase family. XerD subfamily. Forms a cyclic heterotetrameric complex composed of two molecules of XerC and two molecules of XerD.

The protein localises to the cytoplasm. Site-specific tyrosine recombinase, which acts by catalyzing the cutting and rejoining of the recombining DNA molecules. The XerC-XerD complex is essential to convert dimers of the bacterial chromosome into monomers to permit their segregation at cell division. It also contributes to the segregational stability of plasmids. This chain is Tyrosine recombinase XerD, found in Listeria monocytogenes serovar 1/2a (strain ATCC BAA-679 / EGD-e).